The primary structure comprises 98 residues: Cystatin-A (98 aa).

N-acetylmethionine is present on M1. The short motif at 46–50 (QVVAG) is the Secondary area of contact element.

It belongs to the cystatin family.

It is found in the cytoplasm. In terms of biological role, this is an intracellular thiol proteinase inhibitor. The protein is Cystatin-A (CSTA) of Felis catus (Cat).